A 254-amino-acid polypeptide reads, in one-letter code: Ubiquinone biosynthesis O-methyltransferase (254 aa).

Positions 47, 78, 99, and 141 each coordinate S-adenosyl-L-methionine.

It belongs to the methyltransferase superfamily. UbiG/COQ3 family.

It catalyses the reaction a 3-demethylubiquinol + S-adenosyl-L-methionine = a ubiquinol + S-adenosyl-L-homocysteine + H(+). The enzyme catalyses a 3-(all-trans-polyprenyl)benzene-1,2-diol + S-adenosyl-L-methionine = a 2-methoxy-6-(all-trans-polyprenyl)phenol + S-adenosyl-L-homocysteine + H(+). It functions in the pathway cofactor biosynthesis; ubiquinone biosynthesis. Its function is as follows. O-methyltransferase that catalyzes the 2 O-methylation steps in the ubiquinone biosynthetic pathway. This Rhodopseudomonas palustris (strain BisB18) protein is Ubiquinone biosynthesis O-methyltransferase.